Reading from the N-terminus, the 222-residue chain is Flagellar L-ring protein (222 aa).

Residues 1–18 form the signal peptide; it reads MRRPGAAALAAAALALAG. Cys19 is lipidated: N-palmitoyl cysteine. The S-diacylglycerol cysteine moiety is linked to residue Cys19.

It belongs to the FlgH family. In terms of assembly, the basal body constitutes a major portion of the flagellar organelle and consists of four rings (L,P,S, and M) mounted on a central rod.

It localises to the cell outer membrane. The protein localises to the bacterial flagellum basal body. In terms of biological role, assembles around the rod to form the L-ring and probably protects the motor/basal body from shearing forces during rotation. The chain is Flagellar L-ring protein from Burkholderia mallei (strain ATCC 23344).